We begin with the raw amino-acid sequence, 118 residues long: MPFSKLGRNKSQRRALLRTLMTDLIVNEQIITTESKAKELQRLADKMITLAKKGTLHTRRQAARHLFDEKINEETTVLQKLFQKLASQYLNCQGGYTRVIKTVPRRGDAAPMAIIAFA.

It belongs to the bacterial ribosomal protein bL17 family. As to quaternary structure, part of the 50S ribosomal subunit. Contacts protein L32.

The chain is Large ribosomal subunit protein bL17 from Phytoplasma australiense.